A 2082-amino-acid polypeptide reads, in one-letter code: Polyketide synthase ThaQ (2082 aa).

Residues 398-468 (NDARRAGSAR…DSAHDSAHAA (71 aa)) form a disordered region. Basic and acidic residues-rich tracts occupy residues 399–411 (DARRAGSARRDAR), 419–430 (HGARHEAAHDAQ), and 439–468 (ADAHDSAHDSAHDSAHDSAHDSAHDSAHAA). The 77-residue stretch at 470–546 (ALRREGRAYL…ALLDHLLAAH (77 aa)) folds into the Carrier 1 domain. An O-(pantetheine 4'-phosphoryl)serine modification is found at serine 507. Composition is skewed to low complexity over residues 560-582 (APARGVGARAQAAQASGEGRAAP) and 593-605 (DTPSSAPSSAPAR). The interval 560–655 (APARGVGARA…RYAPRAPHPD (96 aa)) is disordered. Residues 606–631 (PDQPAPSGPPAQPAQPAPRADTPPPA) show a composition bias toward pro residues. The 420-residue stretch at 658–1077 (AEPVAIIGIS…GVNAHVVLEE (420 aa)) folds into the Ketosynthase family 3 (KS3) domain. Disordered stretches follow at residues 1250–1269 (APGTRHASAGEATEAAEAAE) and 1603–1653 (ARGP…VKSD). 2 stretches are compositionally biased toward low complexity: residues 1256–1269 (ASAGEATEAAEAAE) and 1612–1624 (SPDAQPPAARAQA). Positions 1640-1653 (ADSKAGPKSEVKSD) are enriched in basic and acidic residues. Positions 1669–1743 (ASVAASVEDA…ALVRAVAEAV (75 aa)) constitute a Carrier 2 domain. At serine 1703 the chain carries O-(pantetheine 4'-phosphoryl)serine. One can recognise an AB hydrolase-1 domain in the interval 1792 to 2022 (PRVVLIPGLG…GAGHAVFLTH (231 aa)). Over residues 2045–2067 (GAAESVESVEATEAAEAARSPAV) the composition is skewed to low complexity. Positions 2045–2082 (GAAESVESVEATEAAEAARSPAVARRRATDDAPVGSDA) are disordered.

Pantetheine 4'-phosphate is required as a cofactor.

It localises to the cytoplasm. It functions in the pathway antibiotic biosynthesis. Its function is as follows. Involved in production of the polyketide antibiotic thailandamide. This is Polyketide synthase ThaQ from Burkholderia thailandensis (strain ATCC 700388 / DSM 13276 / CCUG 48851 / CIP 106301 / E264).